The following is a 334-amino-acid chain: 6-phosphogluconolactonase (334 aa).

Belongs to the cycloisomerase 2 family.

It carries out the reaction 6-phospho-D-glucono-1,5-lactone + H2O = 6-phospho-D-gluconate + H(+). It functions in the pathway carbohydrate degradation; pentose phosphate pathway; D-ribulose 5-phosphate from D-glucose 6-phosphate (oxidative stage): step 2/3. Its function is as follows. Catalyzes the hydrolysis of 6-phosphogluconolactone to 6-phosphogluconate. This Yersinia pseudotuberculosis serotype IB (strain PB1/+) protein is 6-phosphogluconolactonase.